The primary structure comprises 142 residues: uncharacterized protein (142 aa).

The 120-residue stretch at 1–120 (MADKFDANDE…TILKWEKNMD (120 aa)) folds into the N-acetyltransferase domain.

This sequence belongs to the acetyltransferase family.

This is an uncharacterized protein from Streptococcus pyogenes serotype M3 (strain ATCC BAA-595 / MGAS315).